The primary structure comprises 450 residues: MLVTAYLAFVGLLASCLGLELSRCRAKPPGRACSNPSFLRFQLDFYQVYFLALAADWLQAPYLYKLYQHYYFLEGQIAILYVCGLASTVLFGLVASSLVDWLGRKNSCVLFSLTYSLCCLTKLSQDYFVLLVGRALGGLSTALLFSAFEAWYIHEHVERHDFPAEWIPATFARAAFWNHVLAVVAGVAAEAVASWIGLGPVAPFVAAIPLLALAGALALRNWGENYDRQRAFSRTCAGGLRCLLSDRRVLLLGTIQALFESVIFIFVFLWTPVLDPHGAPLGIIFSSFMAASLLGSSLYRIATSKRYHLQPMHLLSLAVLIVVFSLFMLTFSTSPGQESPVESFIAFLLIELACGLYFPSMSFLRRKVIPETEQAGVLNWFRVPLHSLACLGLLVLHDSDRKTGTRNMFSICSAVMVMALLAVVGLFTVVRHDAELRVPSPTEEPYAPEL.

12 helical membrane passes run 1-21, 43-63, 79-99, 128-148, 174-194, 195-215, 249-269, 278-298, 311-331, 344-364, 376-396, and 409-429; these read MLVT…GLEL, LDFY…APYL, ILYV…SSLV, FVLL…FSAF, AAFW…AVAS, WIGL…ALAG, VLLL…FVFL, GAPL…GSSL, PMHL…MLTF, FIAF…MSFL, GVLN…LLVL, and FSIC…LFTV.

The protein belongs to the major facilitator superfamily. As to expression, expressed ubiquitously but at relatively higher levels in the olfactory bulb and the skeletal muscle.

The protein resides in the cell membrane. Functionally, mediates high-affinity intracellular uptake of the rare oligo-element molybdenum. The protein is Molybdate-anion transporter (MFSD5) of Homo sapiens (Human).